The sequence spans 187 residues: RNA pyrophosphohydrolase (187 aa).

The 144-residue stretch at 6-149 folds into the Nudix hydrolase domain; the sequence is GYRANVGIIL…KRQVYRLALT (144 aa). The Nudix box motif lies at 38 to 59; that stretch reads GGIKSGETPTQAMYRELAEETG.

Belongs to the Nudix hydrolase family. RppH subfamily. A divalent metal cation serves as cofactor.

Its function is as follows. Accelerates the degradation of transcripts by removing pyrophosphate from the 5'-end of triphosphorylated RNA, leading to a more labile monophosphorylated state that can stimulate subsequent ribonuclease cleavage. The polypeptide is RNA pyrophosphohydrolase (Nitrosomonas eutropha (strain DSM 101675 / C91 / Nm57)).